A 263-amino-acid chain; its full sequence is Proenkephalin-A (263 aa).

The first 24 residues, 1 to 24 (MARFLGLCTWLLALGPGLLATVRA), serve as a signal peptide directing secretion. Cystine bridges form between Cys26–Cys48, Cys30–Cys52, and Cys33–Cys65. 2 consecutive propeptides follow at residues 192–203 (SPHLEDETKELQ) and 213–223 (VGRPEWWMDYQ). Ser247 carries the post-translational modification Phosphoserine.

It belongs to the opioid neuropeptide precursor family. In terms of processing, proenkephalin-A is cleaved by CTSL to generate Met-enkephalin. Post-translationally, processed and degraded by ACE. Probably cleaved by ACE. In terms of processing, processed by ACE to generate Met-enkephalin in the nucleus accumbens of the brain. Post-translationally, the N-terminal domain contains 6 conserved cysteines thought to be involved in disulfide bonding and/or processing. As to expression, secreted by neuroendocrine chromaffin cells through cromaffin granules.

The protein localises to the cytoplasmic vesicle. Its subcellular location is the secretory vesicle. It is found in the chromaffin granule lumen. The protein resides in the secreted. Neuropeptide that competes with and mimic the effects of opiate drugs. They play a role in a number of physiologic functions, including pain perception and responses to stress. Its function is as follows. Met-enkephalin-Arg-Phe neuropeptide acts as a strong ligand of Mu-type opioid receptor OPRM1. Met-enkephalin-Arg-Phe-binding to OPRM1 in the nucleus accumbens of the brain increases activation of OPRM1, leading to long-term synaptic depression of glutamate release. In terms of biological role, increases glutamate release in the striatum and decreases GABA concentration in the striatum. Functionally, increases glutamate release in the striatum. Enkelytin possesses antibacterial activity against Gram-positive bacteria such as Micrococcus luteus and Bacillus megaterium. The protein is Proenkephalin-A (PENK) of Bos taurus (Bovine).